We begin with the raw amino-acid sequence, 88 residues long: Large ribosomal subunit protein bL31B (88 aa).

This sequence belongs to the bacterial ribosomal protein bL31 family. Type B subfamily. Part of the 50S ribosomal subunit.

The protein is Large ribosomal subunit protein bL31B of Bordetella pertussis (strain Tohama I / ATCC BAA-589 / NCTC 13251).